The primary structure comprises 294 residues: MAVEARHMNLFSSQYITNRECVKSQTNMNNGQQIAGGGFPVTIGDRNLQYIDPINSFNKSESELTAISKRQRDSTFDSDALIASQKRRAIAFSPASLIDAELVSQIQQQNSEIDRFVAQQTETLRIELEARQRTQTRMLASAVQNAILKKLKAKDEEIIRMGKLNWVLQERVKNLYVENQIWRDLAQTNEATANNLRSNLEQVLAQVDDLDAFRRPLVEEADDAESSCGSCDGGDVTAVVNGGCKRCGELTASVLVLPCRHLCLCTVCGSSALLRTCPVCDMVMTASVHVNMSS.

Residues 168–204 are WRD domain; that stretch reads LQERVKNLYVENQIWRDLAQTNEATANNLRSNLEQVL. Residues 183-212 are a coiled coil; sequence RDLAQTNEATANNLRSNLEQVLAQVDDLDA. An RING-type zinc finger spans residues 244-281; the sequence is CKRCGELTASVLVLPCRHLCLCTVCGSSALLRTCPVCD.

As to quaternary structure, interacts with the DELLA proteins GAI, RGA, RGL1, RGL2 and RGL3.

It catalyses the reaction S-ubiquitinyl-[E2 ubiquitin-conjugating enzyme]-L-cysteine + [acceptor protein]-L-lysine = [E2 ubiquitin-conjugating enzyme]-L-cysteine + N(6)-ubiquitinyl-[acceptor protein]-L-lysine.. Its pathway is protein degradation; proteasomal ubiquitin-dependent pathway. E3 ubiquitin-protein ligase involved in regulation of abiotic stress responses. Not involved in ubiquitination of MYB108/BOS1. Has no effect on the stability of the DELLA proteins. The polypeptide is BOI-related E3 ubiquitin-protein ligase 1 (BRG1) (Arabidopsis thaliana (Mouse-ear cress)).